The primary structure comprises 89 residues: Small ribosomal subunit protein uS15 (89 aa).

This sequence belongs to the universal ribosomal protein uS15 family. As to quaternary structure, part of the 30S ribosomal subunit. Forms a bridge to the 50S subunit in the 70S ribosome, contacting the 23S rRNA.

Functionally, one of the primary rRNA binding proteins, it binds directly to 16S rRNA where it helps nucleate assembly of the platform of the 30S subunit by binding and bridging several RNA helices of the 16S rRNA. Forms an intersubunit bridge (bridge B4) with the 23S rRNA of the 50S subunit in the ribosome. In Pseudomonas fluorescens (strain SBW25), this protein is Small ribosomal subunit protein uS15.